A 78-amino-acid chain; its full sequence is Large ribosomal subunit protein bL28 (78 aa).

The segment at 1–22 (MSRVCQVTGKRPMSGNNRSHAM) is disordered.

The protein belongs to the bacterial ribosomal protein bL28 family.

The chain is Large ribosomal subunit protein bL28 from Yersinia pseudotuberculosis serotype O:1b (strain IP 31758).